The following is a 189-amino-acid chain: Probable nicotinate-nucleotide adenylyltransferase (189 aa).

Belongs to the NadD family.

The catalysed reaction is nicotinate beta-D-ribonucleotide + ATP + H(+) = deamido-NAD(+) + diphosphate. It functions in the pathway cofactor biosynthesis; NAD(+) biosynthesis; deamido-NAD(+) from nicotinate D-ribonucleotide: step 1/1. In terms of biological role, catalyzes the reversible adenylation of nicotinate mononucleotide (NaMN) to nicotinic acid adenine dinucleotide (NaAD). The polypeptide is Probable nicotinate-nucleotide adenylyltransferase (Bacillus cereus (strain AH187)).